A 1741-amino-acid polypeptide reads, in one-letter code: Meiosis regulator and mRNA stability factor 1 (1741 aa).

The NYN domain occupies 345-482; it reads IGVFWDIENC…ALLHHAHELV (138 aa). 3 disordered regions span residues 594–636, 659–678, and 683–716; these read KVKS…GSVI, TENHQEHLREIPSQNNSHAA, and LTTKKSGVGESSCKSSYKKETSVSRSMTNSPVDK. A compositionally biased stretch (basic and acidic residues) spans 659–668; it reads TENHQEHLRE. Positions 788–867 constitute an RRM domain; sequence ADIQISNIDY…KRIQVSLATG (80 aa). HTH OST-type domains lie at 872–946, 1000–1076, 1097–1171, 1173–1248, 1257–1332, 1333–1408, 1409–1483, and 1484–1558; these read SLSL…SPLG, SLKT…HNKP, QLIQ…LTHR, QVKR…IPKR, RTKQ…TEVE, QVKA…INRK, SLRT…VRLT, and NLYM…LKND. Residues 1684–1700 are compositionally biased toward polar residues; that stretch reads KLTSGSVASSTAENTSV. The segment at 1684 to 1727 is disordered; sequence KLTSGSVASSTAENTSVPPRHSSETQLNKEAMDSPAKKQHKNKV.

It localises to the peroxisome. In terms of biological role, essential regulator of oogenesis required for female meiotic progression to repress transposable elements and preventing their mobilization, which is essential for the germline integrity. This chain is Meiosis regulator and mRNA stability factor 1, found in Gallus gallus (Chicken).